The primary structure comprises 401 residues: MRFSRKLLGPFVGSLAKKLDYYSQFQPSSLTIQQYLDFGRIGTSANSYTFLKNELLVRLANIMQEFTLLPPKLLQMPSSKMVSNWYAESFEDLLLFEASDSSPEQVARFNDQLTVVLKRHAHVVETMAEGLIELRESDGVDIASEKGIQYFLDRFYINRISIRMLQNQHLVVFGNVLPESPRHVGCIDPACDVESVVYDAFENARFLCDRYYLTSPSMKLEMHNAVEKGKPISIVAVPSHLYHMMFELFKNAMRATVEYHGVDDDLPDIKVYVVKGQEDLSIKICDRGGGVSRTILERLYNYMYSTAPPPPRDGTQAPLAGYGYGLPLSRLYARYFLGDLFLVSMEGHGTDACIYLKAVPVEASEVLPIYSTSSRRNLTMGPQVADWSHHVPGQGNRPAQS.

The 230-residue stretch at 131 to 360 folds into the Histidine kinase domain; the sequence is LIELRESDGV…DACIYLKAVP (230 aa). ATP is bound by residues 247–254, Asp-286, 305–306, and 321–326; these read ELFKNAMR, ST, and GYGYGL.

Belongs to the PDK/BCKDK protein kinase family.

The protein localises to the mitochondrion matrix. The enzyme catalyses L-seryl-[pyruvate dehydrogenase E1 alpha subunit] + ATP = O-phospho-L-seryl-[pyruvate dehydrogenase E1 alpha subunit] + ADP + H(+). Functionally, inhibits the mitochondrial pyruvate dehydrogenase complex by phosphorylation of the E1 alpha subunit, thus contributing to the regulation of glucose metabolism. Required for normal lifespan. This Caenorhabditis elegans protein is Probable [pyruvate dehydrogenase (acetyl-transferring)] kinase, mitochondrial (pdhk-2).